Consider the following 413-residue polypeptide: Glutamate-1-semialdehyde 2,1-aminomutase (413 aa).

K260 is subject to N6-(pyridoxal phosphate)lysine.

This sequence belongs to the class-III pyridoxal-phosphate-dependent aminotransferase family. HemL subfamily. Requires pyridoxal 5'-phosphate as cofactor.

The protein resides in the cytoplasm. It carries out the reaction (S)-4-amino-5-oxopentanoate = 5-aminolevulinate. It functions in the pathway porphyrin-containing compound metabolism; protoporphyrin-IX biosynthesis; 5-aminolevulinate from L-glutamyl-tRNA(Glu): step 2/2. This Methanoregula boonei (strain DSM 21154 / JCM 14090 / 6A8) protein is Glutamate-1-semialdehyde 2,1-aminomutase.